A 466-amino-acid polypeptide reads, in one-letter code: Muscarinic acetylcholine receptor M2 (466 aa).

Residues 1–25 lie on the Extracellular side of the membrane; sequence MNNSTYINSSSENVIALESPYKTIE. N-linked (GlcNAc...) asparagine glycosylation is found at asparagine 2, asparagine 3, and asparagine 8. The chain crosses the membrane as a helical span at residues 26-48; the sequence is VVFIVLVAGSLSLVTIIGNILVM. At 49–62 the chain is on the cytoplasmic side; that stretch reads VSIKVNRHLQTVNN. The chain crosses the membrane as a helical span at residues 63-83; that stretch reads YFLFSLACADLIIGIFSMNLY. Residues 84–100 lie on the Extracellular side of the membrane; that stretch reads TLYTVIGYWPLGPVVCD. A disulfide bridge links cysteine 99 with cysteine 179. A helical transmembrane segment spans residues 101-122; sequence LWLALDYVVSNASVMNLLIISF. The short motif at 123 to 125 is the Important for signaling element; that stretch reads DRY. The Cytoplasmic portion of the chain corresponds to 123–142; it reads DRYFCVTKPLTYPVKRTTKM. A helical membrane pass occupies residues 143–165; sequence AGMMIAAAWVLSFILWAPAILFW. The Extracellular portion of the chain corresponds to 166–187; it reads QFIVGGRTVPDKDCYIQFFSNP. Residues 188 to 212 form a helical membrane-spanning segment; sequence AVTFGTAIAAFYLPVIIMTVLYWQI. The Cytoplasmic portion of the chain corresponds to 213–387; the sequence is SRASKSRIKK…PPSREKKVTR (175 aa). Disordered regions lie at residues 223-265 and 279-315; these read GKKE…KVQN and QGEE…SASQ. 2 stretches are compositionally biased toward polar residues: residues 228–238 and 246–256; these read AQNQDPVSPSL and PNNNNIPTSSD. Positions 287-298 are enriched in low complexity; that stretch reads NDSTSVSVVPSN. The chain crosses the membrane as a helical span at residues 388–410; the sequence is TILAILLAFIITWTPYNVMVLIN. The Extracellular segment spans residues 411–418; the sequence is SFCASCIP. The cysteines at positions 413 and 416 are disulfide-linked. Residues 419–442 traverse the membrane as a helical segment; the sequence is GTVWTIGYWLCYINSTINPACYAL. An Important for signaling motif is present at residues 436 to 440; the sequence is NPACY. Residues 443-466 lie on the Cytoplasmic side of the membrane; that stretch reads CNATFKKTFKHLLMCHYKNIGATR. A phosphothreonine mark is found at threonine 446, threonine 450, and threonine 465.

This sequence belongs to the G-protein coupled receptor 1 family. Muscarinic acetylcholine receptor subfamily. CHRM2 sub-subfamily.

It localises to the cell membrane. The protein resides in the postsynaptic cell membrane. Its function is as follows. The muscarinic acetylcholine receptor mediates various cellular responses, including inhibition of adenylate cyclase, breakdown of phosphoinositides and modulation of potassium channels through the action of G proteins. Primary transducing effect is adenylate cyclase inhibition. Signaling promotes phospholipase C activity, leading to the release of inositol trisphosphate (IP3); this then triggers calcium ion release into the cytosol. This Gallus gallus (Chicken) protein is Muscarinic acetylcholine receptor M2 (CHRM2).